Here is a 469-residue protein sequence, read N- to C-terminus: Sorting and assembly machinery component 50 homolog (469 aa).

Residues 45-125 enclose the POTRA domain; that stretch reads VVVQHVHFDG…LDVTFEVTEL (81 aa). Residue K255 is modified to N6-methyllysine.

It belongs to the SAM50/omp85 family. Associates with the mitochondrial contact site and cristae organizing system (MICOS) complex, composed of at least MICOS10/MIC10, CHCHD3/MIC19, CHCHD6/MIC25, APOOL/MIC27, IMMT/MIC60, APOO/MIC23/MIC26 and QIL1/MIC13. This complex was also known under the names MINOS or MitOS complex. The MICOS complex associates with mitochondrial outer membrane proteins SAMM50, MTX1 and MTX2 (together described as components of the mitochondrial outer membrane sorting assembly machinery (SAM) complex) and DNAJC11, mitochondrial inner membrane protein TMEM11 and with HSPA9. The MICOS and SAM complexes together with DNAJC11 are part of a large protein complex spanning both membranes termed the mitochondrial intermembrane space bridging (MIB) complex. Interacts with IMMT/MIC60. Interacts with CHCHD3/MIC19. Interacts with ARMC1.

The protein localises to the mitochondrion outer membrane. It localises to the cytoplasm. It is found in the mitochondrion. Its function is as follows. Plays a crucial role in the maintenance of the structure of mitochondrial cristae and the proper assembly of the mitochondrial respiratory chain complexes. Required for the assembly of TOMM40 into the TOM complex. This Bos taurus (Bovine) protein is Sorting and assembly machinery component 50 homolog (SAMM50).